Here is a 643-residue protein sequence, read N- to C-terminus: 3D-(3,5/4)-trihydroxycyclohexane-1,2-dione hydrolase (643 aa).

Glu-65 provides a ligand contact to thiamine diphosphate. Residues Ser-441–Gly-521 form a thiamine pyrophosphate binding region. The Mg(2+) site is built by Asp-492 and Asn-519.

The protein belongs to the TPP enzyme family. Mg(2+) serves as cofactor. Requires thiamine diphosphate as cofactor.

It catalyses the reaction 3D-3,5/4-trihydroxycyclohexane-1,2-dione + H2O = 5-deoxy-D-glucuronate + H(+). It functions in the pathway polyol metabolism; myo-inositol degradation into acetyl-CoA; acetyl-CoA from myo-inositol: step 3/7. Functionally, involved in the cleavage of the C1-C2 bond of 3D-(3,5/4)-trihydroxycyclohexane-1,2-dione (THcHDO) to yield 5-deoxy-glucuronate (5DG). In Clostridium botulinum (strain Alaska E43 / Type E3), this protein is 3D-(3,5/4)-trihydroxycyclohexane-1,2-dione hydrolase.